Here is a 347-residue protein sequence, read N- to C-terminus: Anthranilate phosphoribosyltransferase (347 aa).

Residues G86, 89–90, T94, 96–99, 114–122, and S126 each bind 5-phospho-alpha-D-ribose 1-diphosphate; these read GD, NIST, and KHGNRSVSS. G86 is an anthranilate binding site. S98 provides a ligand contact to Mg(2+). Residue N117 participates in anthranilate binding. R172 serves as a coordination point for anthranilate. Residues D230 and E231 each contribute to the Mg(2+) site.

It belongs to the anthranilate phosphoribosyltransferase family. Homodimer. The cofactor is Mg(2+).

The enzyme catalyses N-(5-phospho-beta-D-ribosyl)anthranilate + diphosphate = 5-phospho-alpha-D-ribose 1-diphosphate + anthranilate. The protein operates within amino-acid biosynthesis; L-tryptophan biosynthesis; L-tryptophan from chorismate: step 2/5. Functionally, catalyzes the transfer of the phosphoribosyl group of 5-phosphorylribose-1-pyrophosphate (PRPP) to anthranilate to yield N-(5'-phosphoribosyl)-anthranilate (PRA). This chain is Anthranilate phosphoribosyltransferase, found in Shewanella frigidimarina (strain NCIMB 400).